A 197-amino-acid chain; its full sequence is Pyridoxal 5'-phosphate synthase subunit PdxT (197 aa).

52–54 (GES) provides a ligand contact to L-glutamine. C84 (nucleophile) is an active-site residue. L-glutamine contacts are provided by residues R111 and 139 to 140 (IR). Catalysis depends on charge relay system residues H175 and E177.

The protein belongs to the glutaminase PdxT/SNO family. In the presence of PdxS, forms a dodecamer of heterodimers. Only shows activity in the heterodimer.

The catalysed reaction is aldehydo-D-ribose 5-phosphate + D-glyceraldehyde 3-phosphate + L-glutamine = pyridoxal 5'-phosphate + L-glutamate + phosphate + 3 H2O + H(+). It carries out the reaction L-glutamine + H2O = L-glutamate + NH4(+). It functions in the pathway cofactor biosynthesis; pyridoxal 5'-phosphate biosynthesis. Its function is as follows. Catalyzes the hydrolysis of glutamine to glutamate and ammonia as part of the biosynthesis of pyridoxal 5'-phosphate. The resulting ammonia molecule is channeled to the active site of PdxS. This chain is Pyridoxal 5'-phosphate synthase subunit PdxT, found in Halorubrum lacusprofundi (strain ATCC 49239 / DSM 5036 / JCM 8891 / ACAM 34).